The following is a 366-amino-acid chain: Alanine racemase (366 aa).

Residue Lys-40 is the Proton acceptor; specific for D-alanine of the active site. At Lys-40 the chain carries N6-(pyridoxal phosphate)lysine. Arg-136 provides a ligand contact to substrate. The active-site Proton acceptor; specific for L-alanine is the Tyr-263. Met-310 serves as a coordination point for substrate.

Belongs to the alanine racemase family. It depends on pyridoxal 5'-phosphate as a cofactor.

The enzyme catalyses L-alanine = D-alanine. Its pathway is amino-acid biosynthesis; D-alanine biosynthesis; D-alanine from L-alanine: step 1/1. Functionally, catalyzes the interconversion of L-alanine and D-alanine. May also act on other amino acids. The polypeptide is Alanine racemase (alr) (Streptococcus pyogenes serotype M12 (strain MGAS2096)).